The primary structure comprises 245 residues: Probable proteasome subunit alpha type-2 (245 aa).

It belongs to the peptidase T1A family. As to quaternary structure, the 26S proteasome consists of a 20S proteasome core and two 19S regulatory subunits. The 20S proteasome core is composed of 28 subunits that are arranged in four stacked rings, resulting in a barrel-shaped structure. The two end rings are each formed by seven alpha subunits, and the two central rings are each formed by seven beta subunits. The catalytic chamber with the active sites is on the inside of the barrel.

The protein resides in the cytoplasm. The protein localises to the nucleus. Its function is as follows. The proteasome is a multicatalytic proteinase complex which is characterized by its ability to cleave peptides with Arg, Phe, Tyr, Leu, and Glu adjacent to the leaving group at neutral or slightly basic pH. The proteasome has an ATP-dependent proteolytic activity. In Schizosaccharomyces pombe (strain 972 / ATCC 24843) (Fission yeast), this protein is Probable proteasome subunit alpha type-2 (pre8).